The chain runs to 636 residues: DNA mismatch repair protein MutL (636 aa).

A disordered region spans residues 341-420 (APLINKPEQQ…PGAEEYTPEA (80 aa)). A compositionally biased stretch (basic and acidic residues) spans 348–358 (EQQKLDFDQVR).

Belongs to the DNA mismatch repair MutL/HexB family.

Functionally, this protein is involved in the repair of mismatches in DNA. It is required for dam-dependent methyl-directed DNA mismatch repair. May act as a 'molecular matchmaker', a protein that promotes the formation of a stable complex between two or more DNA-binding proteins in an ATP-dependent manner without itself being part of a final effector complex. This Bacillus licheniformis (strain ATCC 14580 / DSM 13 / JCM 2505 / CCUG 7422 / NBRC 12200 / NCIMB 9375 / NCTC 10341 / NRRL NRS-1264 / Gibson 46) protein is DNA mismatch repair protein MutL.